The sequence spans 1448 residues: DNA primase TraC (1448 aa).

Basic and acidic residues-rich tracts occupy residues 844-856 (ARVQEERVRRDPN), 863-872 (SAAKEARKTA), and 882-898 (DAQRRAAELERQERDRQ). Disordered regions lie at residues 844–915 (ARVQ…INVP) and 952–982 (QGAATAAVEPRSAQPAPEAQGEAQKPAQQAQ). Over residues 964 to 982 (AQPAPEAQGEAQKPAQQAQ) the composition is skewed to low complexity. The Toprim domain occupies 1237-1325 (PALVISEGYA…GKAIFPIFAP (89 aa)). The tract at residues 1414-1448 (ISQVQRDEQQHQEQKHVEKKQQQIEQRPRRAARIG) is disordered. Over residues 1418 to 1441 (QRDEQQHQEQKHVEKKQQQIEQRP) the composition is skewed to basic and acidic residues.

Its function is as follows. Required for autonomous replication in E.coli. Transferred into the recipient cell during bacterial conjugation. Catalyzes the synthesis of short oligoribonucleotide primers with CpA or pCpA at their 5'-termini on a single-stranded template DNA. The protein is DNA primase TraC (traC) of Escherichia coli.